We begin with the raw amino-acid sequence, 255 residues long: tRNA (guanine-N(7)-)-methyltransferase (255 aa).

A disordered region spans residues 1–29 (MSDSDASRPSAIASDGPDAAGKHASGAPW). S-adenosyl-L-methionine-binding residues include Glu-86, Glu-111, Asp-138, and Asp-160. Residue Asp-160 is part of the active site. Residues Lys-164, Asp-196, and 233–236 (TRYE) each bind substrate.

Belongs to the class I-like SAM-binding methyltransferase superfamily. TrmB family.

It carries out the reaction guanosine(46) in tRNA + S-adenosyl-L-methionine = N(7)-methylguanosine(46) in tRNA + S-adenosyl-L-homocysteine. It participates in tRNA modification; N(7)-methylguanine-tRNA biosynthesis. In terms of biological role, catalyzes the formation of N(7)-methylguanine at position 46 (m7G46) in tRNA. This chain is tRNA (guanine-N(7)-)-methyltransferase, found in Ruegeria sp. (strain TM1040) (Silicibacter sp.).